A 238-amino-acid chain; its full sequence is tRNA (guanine-N(7)-)-methyltransferase (238 aa).

Positions 68, 93, 120, and 143 each coordinate S-adenosyl-L-methionine. The active site involves Asp-143. Residues Lys-147, Asp-179, and 216 to 219 contribute to the substrate site; that span reads TKFE.

This sequence belongs to the class I-like SAM-binding methyltransferase superfamily. TrmB family.

It catalyses the reaction guanosine(46) in tRNA + S-adenosyl-L-methionine = N(7)-methylguanosine(46) in tRNA + S-adenosyl-L-homocysteine. Its pathway is tRNA modification; N(7)-methylguanine-tRNA biosynthesis. Functionally, catalyzes the formation of N(7)-methylguanine at position 46 (m7G46) in tRNA. This is tRNA (guanine-N(7)-)-methyltransferase from Aliivibrio fischeri (strain MJ11) (Vibrio fischeri).